Consider the following 429-residue polypeptide: Cytochrome c biogenesis protein CcsB (429 aa).

The next 3 membrane-spanning stretches (helical) occupy residues 14–34 (LKVA…GTAL), 72–92 (SFWF…CSWK), and 162–182 (VGPP…TYGV).

This sequence belongs to the Ccs1/CcsB family. In terms of assembly, may interact with CcsA.

The protein localises to the cellular thylakoid membrane. Required during biogenesis of c-type cytochromes (cytochrome c6 and cytochrome f) at the step of heme attachment. This Prochlorococcus marinus (strain SARG / CCMP1375 / SS120) protein is Cytochrome c biogenesis protein CcsB.